Here is a 553-residue protein sequence, read N- to C-terminus: Putative transport protein Ent638_0015 (553 aa).

A run of 5 helical transmembrane segments spans residues 4–24 (IALTVSVLALVAVVGLWIGNI), 28–48 (GVGLGIGGVLFGGIFIGHFAE), 65–85 (FGLILFVYTIGIQVGPGFFAS), 95–115 (LFALGIVVMGGVVTAILHKLF), and 158–178 (MSYAMAYPFGICGILLTMWLV). RCK C-terminal domains are found at residues 191–276 (KKHE…VIGQ) and 279–361 (ETSL…MVGN). The next 6 helical transmembrane spans lie at 371–391 (MLPVFIGIGLGVLLGSIPLYV), 403–425 (AGGPLIMALILGRIGCIGKLYWF), 439–459 (IVLFLSVVGLKSGGDFIDTLA), 464–484 (ISWIGYGFFITAVPLLTIGIL), 493–513 (YLTLCGMLAGSMTDPPALAFA), and 533–553 (LVMFLRIITPQLLAVLFWGMG).

The protein belongs to the AAE transporter (TC 2.A.81) family. YidE subfamily.

It is found in the cell membrane. The protein is Putative transport protein Ent638_0015 of Enterobacter sp. (strain 638).